A 235-amino-acid polypeptide reads, in one-letter code: RNA pyrophosphohydrolase (235 aa).

In terms of domain architecture, Nudix hydrolase spans 6 to 149 (GFRPNVGIIL…KRGVYEMALT (144 aa)). Positions 38–59 (GGIDRGENPEQAMFRELHEEVG) match the Nudix box motif. The disordered stretch occupies residues 184–235 (ANQSGEPGSFPAAGGIPSYATRPGAPFELPPGATFEPDPQTSFGVNAPTKKT).

This sequence belongs to the Nudix hydrolase family. RppH subfamily. A divalent metal cation serves as cofactor.

Accelerates the degradation of transcripts by removing pyrophosphate from the 5'-end of triphosphorylated RNA, leading to a more labile monophosphorylated state that can stimulate subsequent ribonuclease cleavage. This Polaromonas naphthalenivorans (strain CJ2) protein is RNA pyrophosphohydrolase.